Here is a 130-residue protein sequence, read N- to C-terminus: MSMQDPIADMLTRIRNAQQVGKTSVTMPSSKLKKSIAGVLKEEGYVGEFSVNDAAKAELTVELKYFEGKPVIAELDRVSRPGLRSYVGKDELPSVRGGLGIAIVSTSKGVMTDRAARAAGVGGEILCTVF.

The protein belongs to the universal ribosomal protein uS8 family. As to quaternary structure, part of the 30S ribosomal subunit. Contacts proteins S5 and S12.

Its function is as follows. One of the primary rRNA binding proteins, it binds directly to 16S rRNA central domain where it helps coordinate assembly of the platform of the 30S subunit. This chain is Small ribosomal subunit protein uS8, found in Saccharophagus degradans (strain 2-40 / ATCC 43961 / DSM 17024).